The following is a 303-amino-acid chain: Aspartate carbamoyltransferase catalytic subunit (303 aa).

2 residues coordinate carbamoyl phosphate: arginine 51 and threonine 52. Residue lysine 80 coordinates L-aspartate. Carbamoyl phosphate contacts are provided by arginine 101, histidine 129, and glutamine 132. L-aspartate-binding residues include arginine 162 and arginine 221. Carbamoyl phosphate-binding residues include leucine 260 and proline 261.

This sequence belongs to the aspartate/ornithine carbamoyltransferase superfamily. ATCase family. Heterooligomer of catalytic and regulatory chains.

It catalyses the reaction carbamoyl phosphate + L-aspartate = N-carbamoyl-L-aspartate + phosphate + H(+). The protein operates within pyrimidine metabolism; UMP biosynthesis via de novo pathway; (S)-dihydroorotate from bicarbonate: step 2/3. Functionally, catalyzes the condensation of carbamoyl phosphate and aspartate to form carbamoyl aspartate and inorganic phosphate, the committed step in the de novo pyrimidine nucleotide biosynthesis pathway. This is Aspartate carbamoyltransferase catalytic subunit from Saccharolobus islandicus (strain M.16.4 / Kamchatka #3) (Sulfolobus islandicus).